The chain runs to 362 residues: Outer mitochondrial transmembrane helix translocase (362 aa).

The Mitochondrial intermembrane segment spans residues 1–19; the sequence is MVLKEIPTENITRPLGRNE. A helical transmembrane segment spans residues 20–42; the sequence is VIGLLFRLTIFGAVTYFTIKWMV. At 43-362 the chain is on the cytoplasmic side; sequence DAIDPTRKQK…HEAFMQVPLD (320 aa). Residue 137–144 coordinates ATP; that stretch reads GPPGCGKT.

This sequence belongs to the AAA ATPase family. MSP1 subfamily.

The protein localises to the mitochondrion outer membrane. It is found in the peroxisome membrane. The protein resides in the postsynaptic cell membrane. It carries out the reaction [protein]-with a C-terminal TM segment(out) + ATP + H2O = [protein]-with a C-terminal TM segment(in) + ADP + phosphate + H(+). Outer mitochondrial translocase required to remove mislocalized tail-anchored transmembrane proteins on mitochondria. Specifically recognizes and binds tail-anchored transmembrane proteins: acts as a dislocase that mediates the ATP-dependent extraction of mistargeted tail-anchored transmembrane proteins from the mitochondrion outer membrane. Also plays a critical role in regulating the surface expression of AMPA receptors (AMPAR), thereby regulating synaptic plasticity and learning and memory. The polypeptide is Outer mitochondrial transmembrane helix translocase (Danio rerio (Zebrafish)).